A 625-amino-acid polypeptide reads, in one-letter code: Grainyhead-like protein 2 homolog (625 aa).

Disordered stretches follow at residues 1–24 (MSQE…PPFN), 82–112 (VSKA…GGEN), and 428–453 (EERK…SDGK). Positions 1–93 (MSQESDNNKR…KASDSQEDQE (93 aa)) are transcription activation. Composition is skewed to polar residues over residues 98–109 (LGTSEAQSNLSG) and 440–451 (QASQTQCNSSSD). The 239-residue stretch at 244 to 482 (SSGTFQYTLE…DLHSQPVLFI (239 aa)) folds into the Grh/CP2 DB domain.

Belongs to the grh/CP2 family. Grainyhead subfamily. Homodimer, also forms heterodimers with GRHL1 or GRHL3. Expressed in keratinocytes (at protein level). Highly expressed in placenta, prostate, brain and kidney. Lower-level expression in a variety of epithelial tissues such as thymus, lung, salivary gland, mammary gland and digestive tract. Expressed in the cochlear. Expressed in corneal epithelial cells, but not in the endothelium or stroma.

It localises to the nucleus. Its subcellular location is the membrane. Transcription factor playing an important role in primary neurulation and in epithelial development. Binds directly to the consensus DNA sequence 5'-AACCGGTT-3' acting as an activator and repressor on distinct target genes. During embryogenesis, plays unique and cooperative roles with GRHL3 in establishing distinct zones of primary neurulation. Essential for closure 3 (rostral end of the forebrain), functions cooperatively with GRHL3 in closure 2 (forebrain/midbrain boundary) and posterior neuropore closure. Regulates epithelial morphogenesis acting as a target gene-associated transcriptional activator of apical junctional complex components. Up-regulates of CLDN3 and CLDN4, as well as of RAB25, which increases the CLDN4 protein and its localization at tight junctions. Comprises an essential component of the transcriptional machinery that establishes appropriate expression levels of CLDN4 and CDH1 in different types of epithelia. Exhibits functional redundancy with GRHL3 in epidermal morphogenetic events and epidermal wound repair. In lung, forms a regulatory loop with NKX2-1 that coordinates lung epithelial cell morphogenesis and differentiation. In keratinocytes, plays a role in telomerase activation during cellular proliferation, regulates TERT expression by binding to TERT promoter region and inhibiting DNA methylation at the 5'-CpG island, possibly by interfering with DNMT1 enzyme activity. In addition, impairs keratinocyte differentiation and epidermal function by inhibiting the expression of genes clustered at the epidermal differentiation complex (EDC) as well as GRHL1 and GRHL3 through epigenetic mechanisms. The polypeptide is Grainyhead-like protein 2 homolog (GRHL2) (Homo sapiens (Human)).